The following is a 178-amino-acid chain: Transcription factor E (178 aa).

Residues 3-86 (AHEALAEIAG…YWRITDEPIQ (84 aa)) enclose the HTH TFE/IIEalpha-type domain.

This sequence belongs to the TFE family. Monomer. Interaction with RNA polymerase subunits RpoF and RpoE is necessary for Tfe stimulatory transcription activity. Able to interact with Tbp and RNA polymerase in the absence of DNA promoter. Interacts both with the preinitiation and elongation complexes.

Transcription factor that plays a role in the activation of archaeal genes transcribed by RNA polymerase. Facilitates transcription initiation by enhancing TATA-box recognition by TATA-box-binding protein (Tbp), and transcription factor B (Tfb) and RNA polymerase recruitment. Not absolutely required for transcription in vitro, but particularly important in cases where Tbp or Tfb function is not optimal. It dynamically alters the nucleic acid-binding properties of RNA polymerases by stabilizing the initiation complex and destabilizing elongation complexes. Seems to translocate with the RNA polymerase following initiation and acts by binding to the non template strand of the transcription bubble in elongation complexes. This is Transcription factor E from Thermofilum pendens (strain DSM 2475 / Hrk 5).